The sequence spans 394 residues: Nicotinate phosphoribosyltransferase (394 aa).

At histidine 218 the chain carries Phosphohistidine; by autocatalysis.

Belongs to the NAPRTase family. In terms of processing, transiently phosphorylated on a His residue during the reaction cycle. Phosphorylation strongly increases the affinity for substrates and increases the rate of nicotinate D-ribonucleotide production. Dephosphorylation regenerates the low-affinity form of the enzyme, leading to product release.

The catalysed reaction is nicotinate + 5-phospho-alpha-D-ribose 1-diphosphate + ATP + H2O = nicotinate beta-D-ribonucleotide + ADP + phosphate + diphosphate. It participates in cofactor biosynthesis; NAD(+) biosynthesis; nicotinate D-ribonucleotide from nicotinate: step 1/1. Functionally, catalyzes the synthesis of beta-nicotinate D-ribonucleotide from nicotinate and 5-phospho-D-ribose 1-phosphate at the expense of ATP. This is Nicotinate phosphoribosyltransferase from Xylella fastidiosa (strain Temecula1 / ATCC 700964).